The primary structure comprises 524 residues: Probable glutamyl-tRNA reductase 3, chloroplastic (524 aa).

Residues 1 to 52 (MAVSNASVVLSPNLETSSSWYHHNPSSSLDLIRIHTLPMNKMTRRGLIQRVR) constitute a chloroplast transit peptide. Residues 129-132 (TCNR), serine 189, 194-196 (ENQ), and glutamine 200 each bind substrate. The active-site Nucleophile is cysteine 130. 269–274 (GAGEMG) is a binding site for NADP(+).

It belongs to the glutamyl-tRNA reductase family.

Its subcellular location is the plastid. The protein localises to the chloroplast. It catalyses the reaction (S)-4-amino-5-oxopentanoate + tRNA(Glu) + NADP(+) = L-glutamyl-tRNA(Glu) + NADPH + H(+). It functions in the pathway porphyrin-containing compound metabolism; protoporphyrin-IX biosynthesis; 5-aminolevulinate from L-glutamyl-tRNA(Glu): step 1/2. Its pathway is porphyrin-containing compound metabolism; chlorophyll biosynthesis. In terms of biological role, catalyzes the NADPH-dependent reduction of glutamyl-tRNA(Glu) to glutamate 1-semialdehyde (GSA). This is Probable glutamyl-tRNA reductase 3, chloroplastic (HEMA3) from Arabidopsis thaliana (Mouse-ear cress).